Here is a 58-residue protein sequence, read N- to C-terminus: Large ribosomal subunit protein bL32 (58 aa).

Residues Met-1–Gln-15 are compositionally biased toward basic residues. Positions Met-1 to Lys-23 are disordered.

It belongs to the bacterial ribosomal protein bL32 family.

This is Large ribosomal subunit protein bL32 from Parasynechococcus marenigrum (strain WH8102).